Consider the following 101-residue polypeptide: Large ribosomal subunit protein eL31 (101 aa).

It belongs to the eukaryotic ribosomal protein eL31 family.

The chain is Large ribosomal subunit protein eL31 from Ignicoccus hospitalis (strain KIN4/I / DSM 18386 / JCM 14125).